We begin with the raw amino-acid sequence, 208 residues long: Putative speedy protein E7 (208 aa).

It belongs to the Speedy/Ringo family.

This chain is Putative speedy protein E7 (SPDYE7P), found in Homo sapiens (Human).